We begin with the raw amino-acid sequence, 898 residues long: Sodium/hydrogen exchanger 5 (898 aa).

Topologically, residues 1–3 (MLR) are cytoplasmic. The helical transmembrane segment at 4–24 (VALLLLPGLPLAGVGATEEPT) threads the bilayer. Over 25–47 (QEPGPLGEPPGLALFRWQWHEVE) the chain is Extracellular. Residues 48–68 (APYLVALWILVASLAKIVFHL) traverse the membrane as a helical segment. Over 69–75 (SRKVTSL) the chain is Cytoplasmic. The chain crosses the membrane as a helical span at residues 76-96 (VPESCLLILLGLALGGIVLAV). The Extracellular portion of the chain corresponds to 97–136 (AKKAEYQLEPGTFFLFLLPPIVLDSGYFMPSRLFFDNLGA). The helical transmembrane segment at 137-157 (ILTYAVVGTLWNAFTTGVALW) threads the bilayer. Over 158-175 (GLQQAGLVAPRVQAGLLD) the chain is Cytoplasmic. The helical transmembrane segment at 176–196 (FLLFGSLISAVDPVAVLAVFE) threads the bilayer. Residues 197–202 (EVHVNE) are Extracellular-facing. An N-linked (GlcNAc...) asparagine glycan is attached at Asn-201. A helical transmembrane segment spans residues 203 to 223 (TLFIIVFGESLLNDAVTVVLY). Topologically, residues 224-248 (KVCNSFVEMGSANVQATDYLKGVAS) are cytoplasmic. The helical transmembrane segment at 249-269 (LFVVSLGGAAVGLVFAFLLAL) threads the bilayer. The Extracellular segment spans residues 270-278 (TTRFTKRVR). A helical transmembrane segment spans residues 279-299 (IIEPLLVFLLAYAAYLTAEMA). The Cytoplasmic portion of the chain corresponds to 300–333 (SLSAILAVTMCGLGCKKYVEANISHKSRTAVKYT). Residues 334 to 354 (MKTLASSAETVIFMLLGISAV) form a helical membrane-spanning segment. Residues 355 to 362 (DSSKWAWD) lie on the Extracellular side of the membrane. Residues 363 to 383 (SGLVLGTLFFILFFRALGVVL) form a helical membrane-spanning segment. Residues 384 to 400 (QTWVLNQFRLVPLDKID) lie on the Cytoplasmic side of the membrane. Residues 401 to 421 (QVVMSYGGLRGAVAFALVILL) form a helical membrane-spanning segment. The Extracellular segment spans residues 422-430 (DRTKVPAKD). A helical transmembrane segment spans residues 431–451 (YFVATTIVVVFFTVIVQGLTI). Residues 452–898 (KPLVKWLRVK…CIQFNRGGRL (447 aa)) are Cytoplasmic-facing. Disordered stretches follow at residues 660 to 692 (TKSK…RDLG) and 801 to 888 (ESLA…NSHW). Residues 662-674 (SKPRPRKTGHKKK) show a composition bias toward basic residues. The segment covering 856-867 (ESSADIPQQQEL) has biased composition (polar residues).

The protein belongs to the monovalent cation:proton antiporter 1 (CPA1) transporter (TC 2.A.36) family. Interacts with CHP1 and CHP2. Interacts with ARRB2; facilitates the endocytosis of SLC9A5 from the plasma membrane. Interacts with RACK1; this interaction positively regulates SLC9A5 activity and promotes SLC9A5 localization to focal adhesions. Interacts with SCAMP2; this interaction regulates SLC9A5 cell-surface targeting and SLC9A5 activity. In terms of processing, phosphorylated by PRKAA2; promotes its accumulation at the cell surface. Phosphorylated by CSNK2A1 in a manner favoring its beta-arrestin binding and endocytosis. Highly expressed in brain. Strongly expressed in the dentate gyrus.

The protein localises to the cell membrane. It is found in the recycling endosome membrane. Its subcellular location is the cell projection. It localises to the dendritic spine membrane. The protein resides in the synaptic cell membrane. The protein localises to the cell junction. It is found in the focal adhesion. It catalyses the reaction Na(+)(in) + H(+)(out) = Na(+)(out) + H(+)(in). Functionally, plasma membrane Na(+)/H(+) antiporter. Mediates the electroneutral exchange of intracellular H(+) ions for extracellular Na(+) in 1:1 stoichiometry. Responsible for regulating intracellular pH homeostasis, in particular in neural tissues. Acts as a negative regulator of dendritic spine growth. Plays a role in postsynaptic remodeling and signaling. Can also contribute to organellar pH regulation, with consequences for receptor tyrosine kinase trafficking. In Rattus norvegicus (Rat), this protein is Sodium/hydrogen exchanger 5 (Slc9a5).